The chain runs to 157 residues: MKKKANRLDAIKMIISSKEVGSQEELLQELNREGFELTQATLSRDLKQLKVAKAASMNGKYVYVLPNNIMYKRSTDQSAGEMLRNNGFISLQFSGNIAVIRTRPGYASSMAYDIDNNEFSEILGTIAGDDTIMLVLREGVATSKVRQLLSLIIPNIE.

The protein belongs to the ArgR family.

The protein localises to the cytoplasm. The protein operates within amino-acid biosynthesis; L-arginine biosynthesis [regulation]. Regulates arginine biosynthesis genes. In Bacteroides thetaiotaomicron (strain ATCC 29148 / DSM 2079 / JCM 5827 / CCUG 10774 / NCTC 10582 / VPI-5482 / E50), this protein is Arginine repressor.